The primary structure comprises 545 residues: MAKDIYFNEDARKSLLSGVEKLSNAVKVTLGPKGRNVLIDKKFGSPTVTKDGVSVAREIELENPFENMGAQLLKEVAIKTNDVAGDGTTTATVLAYAIAREGLKNVSSGINPIGIKKGIDHAVSLAAEKIRQSAKKITTKEEIAQVASISANNDSYIGEKIAEAMDKVGKDGVITVEESKTFDTTISYVEGMQFDRGYLSPYFSTNKENMSVSFDDAFILIYEKKISSIKELLPVLEKVLGTNKPLLIIAEDIEGDALAALVLNSVRGALKVCAIKSPGFGDRRKAMLEDIAVLTGGVLISEELGLTLETVEIEQLGQAKTIKVDKDNTTIINTGNKEQIKERSELIKKQIEDSTSEYDKEKLQERLAKLVGGVAVINVGAVTEVELKEKKHRVEDALSATRAAVEEGVVPGGGSTLIEVAMYLDTIDTSKLSYEEKQGFEIVKRSLEEPMRQIISNAGFEGSIYIHQIKTEKKGLGFDASSFKWVNMIESGIIDPAKVTRSALQNAASIAGLLLTTECAITDIKEEKNTSGGGGYPMDPGMGMM.

ATP is bound by residues 29–32, lysine 50, 86–90, glycine 413, and aspartate 495; these read TLGP and DGTTT.

Belongs to the chaperonin (HSP60) family. As to quaternary structure, forms a cylinder of 14 subunits composed of two heptameric rings stacked back-to-back. Interacts with the co-chaperonin GroES.

It is found in the cytoplasm. It carries out the reaction ATP + H2O + a folded polypeptide = ADP + phosphate + an unfolded polypeptide.. Functionally, together with its co-chaperonin GroES, plays an essential role in assisting protein folding. The GroEL-GroES system forms a nano-cage that allows encapsulation of the non-native substrate proteins and provides a physical environment optimized to promote and accelerate protein folding. The chain is Chaperonin GroEL from Borreliella afzelii (strain PKo) (Borrelia afzelii).